A 412-amino-acid chain; its full sequence is MTITVVLGAQWGDEGKGKLVDGQCRDAQLCARAAGGHNAGHEVRVSFHLLPSGLINPKWFYHSMNFIGSGVVFHVPSFFSELQELEDKGLVAVHDRILVSDRVNVLLDMHIAVDGLEERELGGIGPCYQASRARNGIKLTDVFHPELFEQKVRRLADGYQKRFGELFDYDIKAELARFDEYRETLKKYVVDGVSFMRSAQQSDMKIVIEGANALMLDIDYGSYPFVTSSSTTLAGIIGGLTLNPKNITEVVGVVKAYTTRVGSGAFKTEDTEEIGTKLQEIGREWGTSTGRRRRSYTDLVVVKYSNSINYYDSLNLTKLDILDTFETIKIAIAYKVDGEELDSYPADLDILERAEVVYHEMPGWQKPTTNAKTYYDLPKAAREYIEYIEKFVGVKVKYIGTGPDREAMIQRA.

GTP contacts are provided by residues 12 to 18 and 40 to 42; these read GDEGKGK and GHE. Aspartate 13 (proton acceptor) is an active-site residue. 2 residues coordinate Mg(2+): aspartate 13 and glycine 40. Residues 13 to 16, 38 to 41, arginine 134, asparagine 212, threonine 227, and arginine 291 contribute to the IMP site; these read DEGK and NAGH. Histidine 41 functions as the Proton donor in the catalytic mechanism. A substrate-binding site is contributed by 287–293; the sequence is TSTGRRR. Residues arginine 293, 318–320, and 400–402 each bind GTP; these read KLD and GTG.

Belongs to the adenylosuccinate synthetase family. In terms of assembly, homodimer. Requires Mg(2+) as cofactor.

The protein localises to the cytoplasm. It carries out the reaction IMP + L-aspartate + GTP = N(6)-(1,2-dicarboxyethyl)-AMP + GDP + phosphate + 2 H(+). It participates in purine metabolism; AMP biosynthesis via de novo pathway; AMP from IMP: step 1/2. Plays an important role in the de novo pathway and in the salvage pathway of purine nucleotide biosynthesis. Catalyzes the first committed step in the biosynthesis of AMP from IMP. This chain is Adenylosuccinate synthetase, found in Fusarium vanettenii (strain ATCC MYA-4622 / CBS 123669 / FGSC 9596 / NRRL 45880 / 77-13-4) (Fusarium solani subsp. pisi).